We begin with the raw amino-acid sequence, 20 residues long: Collagenolytic protease 35 kDa 2 (20 aa).

Positions 1–20 (IVGGTEVTPGEIPYQLSFQD) constitute a Peptidase S1 domain. A disordered region spans residues 1-20 (IVGGTEVTPGEIPYQLSFQD).

The protein belongs to the peptidase S1 family.

The catalysed reaction is Hydrolysis of proteins, with broad specificity for peptide bonds. Native collagen is cleaved about 75% of the length of the molecule from the N-terminus. Low activity on small molecule substrates of both trypsin and chymotrypsin.. Functionally, this enzyme is a serine protease capable of degrading the native triple helix of collagen. The polypeptide is Collagenolytic protease 35 kDa 2 (Chionoecetes opilio (Atlantic snow crab)).